The following is a 434-amino-acid chain: 3-phosphoshikimate 1-carboxyvinyltransferase (434 aa).

Residues Lys22, Ser23, and Arg27 each coordinate 3-phosphoshikimate. Lys22 serves as a coordination point for phosphoenolpyruvate. Residues Gly93 and Arg121 each coordinate phosphoenolpyruvate. Positions 168, 169, 170, 199, 320, and 347 each coordinate 3-phosphoshikimate. Position 170 (Gln170) interacts with phosphoenolpyruvate. Asp320 (proton acceptor) is an active-site residue. Residues Arg351, Arg394, and Lys419 each coordinate phosphoenolpyruvate.

This sequence belongs to the EPSP synthase family. Monomer.

Its subcellular location is the cytoplasm. The enzyme catalyses 3-phosphoshikimate + phosphoenolpyruvate = 5-O-(1-carboxyvinyl)-3-phosphoshikimate + phosphate. Its pathway is metabolic intermediate biosynthesis; chorismate biosynthesis; chorismate from D-erythrose 4-phosphate and phosphoenolpyruvate: step 6/7. In terms of biological role, catalyzes the transfer of the enolpyruvyl moiety of phosphoenolpyruvate (PEP) to the 5-hydroxyl of shikimate-3-phosphate (S3P) to produce enolpyruvyl shikimate-3-phosphate and inorganic phosphate. This is 3-phosphoshikimate 1-carboxyvinyltransferase from Burkholderia lata (strain ATCC 17760 / DSM 23089 / LMG 22485 / NCIMB 9086 / R18194 / 383).